The sequence spans 292 residues: Arabinose operon regulatory protein (292 aa).

Residues P8, T24, R38, Y82, and H93 each contribute to the alpha-L-arabinopyanose site. Residues 180–279 (REACQYISDH…GASPSEFRAG (100 aa)) enclose the HTH araC/xylS-type domain. 2 DNA-binding regions (H-T-H motif) span residues 198 to 219 (ASVAQHVCLSPSRLSHLFRQQL) and 246 to 269 (IATVGRNVGFDDQLYFSRVFKKCT).

Homodimer.

The protein localises to the cytoplasm. With respect to regulation, arabinose converts the repressor form of AraC to the activator form to regulate the araBAD promoter. In the absence of arabinose, AraC binds to the araO2 and araI1 half-sites in the promoter region of the araBAD operon, leading to the formation of a DNA loop that blocks access of RNA polymerase to the promoter. In the presence of arabinose and the cyclic AMP receptor protein (CRP), it binds to the adjacent half-sites araI1 and araI2, leading to the binding of RNA polymerase to the promoter region and transcription of the araBAD operon. AraI1 acts as a switch mechanism allowing both the repressor and the activator forms of AraC protein to regulate the araBAD promoter. Inhibited by D-fucose, which binds competitively to the same site on the protein. Its function is as follows. Transcription factor that regulates the expression of several genes involved in the transport and metabolism of L-arabinose. Functions both as a positive and a negative regulator. In the presence of arabinose, activates the expression of the araBAD, araE, araFGH and araJ promoters. In the absence of arabinose, negatively regulates the araBAD operon. Represses its own transcription. Acts by binding directly to DNA. The chain is Arabinose operon regulatory protein from Escherichia coli (strain K12).